Reading from the N-terminus, the 285-residue chain is Mitochondrial substrate carrier family protein S (285 aa).

Over 1 to 9 (MSTERGLKD) the chain is Mitochondrial intermembrane. Solcar repeat units follow at residues 4–87 (ERGL…MKVL), 96–183 (LTVG…CKRY), and 197–283 (LNLP…VIKL). Residues 10–30 (SIAGTVAGAACLFTGHPFDTI) form a helical membrane-spanning segment. The Mitochondrial matrix segment spans residues 31–61 (RVRLQTSNTPIGIMECFRNTIKYEGFSGLYK). Residues 62-82 (GVTSPLFGMMFETAVLFAGYG) traverse the membrane as a helical segment. Topologically, residues 83 to 101 (QMKVLLQKDENTPLTVGQC) are mitochondrial intermembrane. Residues 102-122 (AIAGGFAGVGASVVLTPVELV) traverse the membrane as a helical segment. At 123 to 150 (KCRLQVQTTGPQKYKGSLDCLVQILKEG) the chain is on the mitochondrial matrix side. Residues 151-172 (GIRGAYRGFTPTIAREFVGNMA) traverse the membrane as a helical segment. Topologically, residues 173–199 (FFSTYETCKRYFKNKENKPNDDDELNL) are mitochondrial intermembrane. A helical membrane pass occupies residues 200–220 (PALIISGGLGGMAYWTVLYPV). The Mitochondrial matrix portion of the chain corresponds to 221-258 (DVAKSKIQISEGAGPSPSIVKVLKEIYSKEGVKGLFRG). A helical membrane pass occupies residues 259 to 277 (YTPTIIRSFPANAAMFSVY). Residues 278 to 285 (ELVIKLLG) lie on the Mitochondrial intermembrane side of the membrane.

The protein belongs to the mitochondrial carrier (TC 2.A.29) family.

Its subcellular location is the mitochondrion inner membrane. Functionally, mitochondrial solute carriers shuttle metabolites, nucleotides, and cofactors through the mitochondrial inner membrane. Mediates the transport of acylcarnitines of different length across the mitochondrial inner membrane from the cytosol to the mitochondrial matrix for their oxidation by the mitochondrial fatty acid-oxidation pathway. The polypeptide is Mitochondrial substrate carrier family protein S (mcfS) (Dictyostelium discoideum (Social amoeba)).